We begin with the raw amino-acid sequence, 239 residues long: Vesicle-associated protein 1-3 (239 aa).

M1 is subject to N-acetylmethionine. T2 carries the N-acetylthreonine; in Vesicle-associated protein 1-3, N-terminally processed modification. The Cytoplasmic portion of the chain corresponds to 2–215 (TTGDLVNIHP…RKETSKKQSG (214 aa)). The region spanning 6-127 (LVNIHPTELK…EDFKLRVVYI (122 aa)) is the MSP domain. 2 positions are modified to phosphoserine: S133 and S164. Residues 179–214 (SMISKLTEEKTSATQQSQKLRLELEMLRKETSKKQS) are a coiled coil. A helical; Anchor for type IV membrane protein transmembrane segment spans residues 216 to 236 (GHSLLLMLLVGLLGCVIGYLL).

Belongs to the VAMP-associated protein (VAP) (TC 9.B.17) family.

The protein localises to the endoplasmic reticulum membrane. Functionally, may play a role in vesicle trafficking. The polypeptide is Vesicle-associated protein 1-3 (PVA13) (Arabidopsis thaliana (Mouse-ear cress)).